A 426-amino-acid polypeptide reads, in one-letter code: Anhydromevalonate phosphate decarboxylase (426 aa).

Asn148 and Glu211 together coordinate Mn(2+). The active-site Proton acceptor is Asp255.

The protein belongs to the UbiD family. It depends on prenylated FMN as a cofactor. Mn(2+) is required as a cofactor.

The enzyme catalyses (2E)-3-methyl-5-phosphooxypent-2-enoate + H(+) = isopentenyl phosphate + CO2. It participates in isoprenoid biosynthesis; isopentenyl diphosphate biosynthesis via mevalonate pathway. Catalyzes the conversion of trans-anhydromevalonate 5-phosphate (tAHMP) into isopentenyl phosphate. Involved in the archaeal mevalonate (MVA) pathway, which provides fundamental precursors for isoprenoid biosynthesis, such as isopentenyl diphosphate (IPP) and dimethylallyl diphosphate (DMAPP). The sequence is that of Anhydromevalonate phosphate decarboxylase from Archaeoglobus fulgidus (strain ATCC 49558 / DSM 4304 / JCM 9628 / NBRC 100126 / VC-16).